The following is a 145-amino-acid chain: Large ribosomal subunit protein uL16 (145 aa).

Basic residues predominate over residues 1–17 (MLMPKRVKHRKVQRGRM). The interval 1 to 20 (MLMPKRVKHRKVQRGRMKGV) is disordered.

Belongs to the universal ribosomal protein uL16 family. In terms of assembly, part of the 50S ribosomal subunit.

Binds 23S rRNA and is also seen to make contacts with the A and possibly P site tRNAs. This Acetivibrio thermocellus (strain ATCC 27405 / DSM 1237 / JCM 9322 / NBRC 103400 / NCIMB 10682 / NRRL B-4536 / VPI 7372) (Clostridium thermocellum) protein is Large ribosomal subunit protein uL16.